The following is a 526-amino-acid chain: Thymocyte selection-associated high mobility group box protein TOX (526 aa).

Residues 194–203 (NMGGTNVAHN) show a composition bias toward polar residues. The interval 194–264 (NMGGTNVAHN…KKDPNEPQKP (71 aa)) is disordered. Low complexity predominate over residues 209 to 220 (GSKSATPSPSSS). Residues 228–245 (DASKINGGEKRPASDMGK) show a composition bias toward basic and acidic residues. The short motif at 237–256 (KRPASDMGKKPKTPKKKKKK) is the Nuclear localization signal element. Over residues 246–256 (KPKTPKKKKKK) the composition is skewed to basic residues. The segment at residues 261–329 (PQKPVSAYAL…EYLKQLAAYR (69 aa)) is a DNA-binding region (HMG box).

This sequence belongs to the high motility group (HMG) box superfamily. In terms of assembly, interacts with HBO1 complex composed at least of KAT7/HBO1, ING4, MEAF6, and JADE2; this complex is involved in histone acetylation. Interacts with DNMT1, LEO1, PAF1, SAP130 and SIN3A; these interactors regulate chromatin remodeling. Interacts with an array of proteins involved in RNA processing and translation and DNA replication. Expressed in neurons of the subventricular zone (at protein level). Expressed in distinct subpopulations of thymocytes undergoing positive selection: double CD4-positive CD8-positive (DP) cells, CD4-positive CD8-low transitional cells and in single CD4-positive and CD8-positive cells (at protein level). Expressed in ILC progenitors and mature ILC subsets: ILC1, ILC2 and ILC3 (at protein level). Expressed in lymphoid tissue-inducer cells and bone marrow NK cell subsets. Abundant in thymus, liver and brain. Also detected in small intestine, spleen, stomach and testis. Highly expressed in tumor-infiltrating CD8-positive T cells (at protein level).

It localises to the nucleus. Its function is as follows. Transcriptional regulator with a major role in neural stem cell commitment and corticogenesis as well as in lymphoid cell development and lymphoid tissue organogenesis. Binds to GC-rich DNA sequences in the proximity of transcription start sites and may alter chromatin structure, modifying access of transcription factors to DNA. During cortical development, controls the neural stem cell pool by inhibiting the switch from proliferative to differentiating progenitors. Beyond progenitor cells, promotes neurite outgrowth in newborn neurons migrating to reach the cortical plate. May activate or repress critical genes for neural stem cell fate such as SOX2, EOMES and ROBO2. Plays an essential role in the development of lymphoid tissue-inducer (LTi) cells, a subset necessary for the formation of secondary lymphoid organs: peripheral lymph nodes and Peyer's patches. Acts as a developmental checkpoint and regulates thymocyte positive selection toward T cell lineage commitment. Required for the development of various T cell subsets, including CD4-positive helper T cells, CD8-positive cytotoxic T cells, regulatory T cells and CD1D-dependent natural killer T (NKT) cells. Required for the differentiation of common lymphoid progenitors (CMP) to innate lymphoid cells (ILC). May regulate the NOTCH-mediated gene program, promoting differentiation of the ILC lineage. Required at the progenitor phase of NK cell development in the bone marrow to specify NK cell lineage commitment. Upon chronic antigen stimulation, diverts T cell development by promoting the generation of exhaustive T cells, while suppressing effector and memory T cell programming. May regulate the expression of genes encoding inhibitory receptors such as PDCD1 and induce the exhaustion program, to prevent the overstimulation of T cells and activation-induced cell death. The sequence is that of Thymocyte selection-associated high mobility group box protein TOX from Mus musculus (Mouse).